The primary structure comprises 950 residues: Protocadherin alpha-9 (950 aa).

The N-terminal stretch at 1–29 is a signal peptide; that stretch reads MLYSSRGDPEGQPLLLSLLILAMWVVGSG. 6 consecutive Cadherin domains span residues 30-133, 134-242, 243-350, 351-455, 456-565, and 588-678; these read QLHY…PPVF, PATQ…APVF, DRTL…APQL, TIKT…APAF, AQSE…APAL, and GVVV…APKS. Topologically, residues 30–697 are extracellular; sequence QLHYSVPEEA…GPEVTLVDVN (668 aa). N-linked (GlcNAc...) asparagine glycans are attached at residues asparagine 254 and asparagine 265. Asparagine 548 is a glycosylation site (N-linked (GlcNAc...) asparagine). A helical membrane pass occupies residues 698 to 718; the sequence is VYLIIAICAVSSLLVLTLLLY. Topologically, residues 719–950 are cytoplasmic; the sequence is TVLRCSAMPT…GNSTTDNSDQ (232 aa). A PXXP 1 repeat occupies 734–737; that stretch reads PGKP. The 5 X 4 AA repeats of P-X-X-P stretch occupies residues 734 to 894; the sequence is PGKPTLVCSS…PDKFIIPGSP (161 aa). Disordered regions lie at residues 770-808, 827-856, and 871-950; these read MAFSPGLSPCAGSTERTGEPSASSDSTGKPRQPNPDWRY, ILRAGPGGPDQQWPTVSSATPEPEAGEVSP, and YGPG…NSDQ. Positions 789–798 are enriched in polar residues; that stretch reads PSASSDSTGK. PXXP repeat units lie at residues 799 to 802, 832 to 835, 873 to 876, and 891 to 894; these read PRQP, PGGP, PGNP, and PGSP. Residues 909-923 are compositionally biased toward basic and acidic residues; it reads DKSDFITFGKKEETK.

It localises to the cell membrane. Potential calcium-dependent cell-adhesion protein. May be involved in the establishment and maintenance of specific neuronal connections in the brain. The polypeptide is Protocadherin alpha-9 (PCDHA9) (Homo sapiens (Human)).